Reading from the N-terminus, the 161-residue chain is Large ribosomal subunit protein uL15 (161 aa).

The disordered stretch occupies residues 1-42 (MKLSDIADNAGSRKKRMRVGRGIGSGKGKQSGRGGKGQTARS). Residues 21–37 (RGIGSGKGKQSGRGGKG) are compositionally biased toward gly residues.

Belongs to the universal ribosomal protein uL15 family. As to quaternary structure, part of the 50S ribosomal subunit.

Binds to the 23S rRNA. This is Large ribosomal subunit protein uL15 from Bradyrhizobium diazoefficiens (strain JCM 10833 / BCRC 13528 / IAM 13628 / NBRC 14792 / USDA 110).